We begin with the raw amino-acid sequence, 61 residues long: Large ribosomal subunit protein bL28 (61 aa).

The segment at 1–26 is disordered; the sequence is MAKDFINGKRTQFGNKRSHALNSSRR. Over residues 9-25 the composition is skewed to polar residues; it reads KRTQFGNKRSHALNSSR.

This sequence belongs to the bacterial ribosomal protein bL28 family.

The protein is Large ribosomal subunit protein bL28 of Limosilactobacillus reuteri (strain DSM 20016) (Lactobacillus reuteri).